Consider the following 468-residue polypeptide: Ribulose bisphosphate carboxylase large chain (468 aa).

An N6,N6,N6-trimethyllysine modification is found at Lys7. 2 residues coordinate substrate: Asn116 and Thr166. Lys168 (proton acceptor) is an active-site residue. Lys170 lines the substrate pocket. Residues Lys194, Asp196, and Glu197 each coordinate Mg(2+). The residue at position 194 (Lys194) is an N6-carboxylysine. His287 acts as the Proton acceptor in catalysis. Substrate contacts are provided by Arg288, His320, and Ser372.

Belongs to the RuBisCO large chain family. Type I subfamily. In terms of assembly, heterohexadecamer of 8 large chains and 8 small chains. It depends on Mg(2+) as a cofactor.

The protein localises to the plastid. The protein resides in the chloroplast. The catalysed reaction is 2 (2R)-3-phosphoglycerate + 2 H(+) = D-ribulose 1,5-bisphosphate + CO2 + H2O. It carries out the reaction D-ribulose 1,5-bisphosphate + O2 = 2-phosphoglycolate + (2R)-3-phosphoglycerate + 2 H(+). Its function is as follows. RuBisCO catalyzes two reactions: the carboxylation of D-ribulose 1,5-bisphosphate, the primary event in carbon dioxide fixation, as well as the oxidative fragmentation of the pentose substrate in the photorespiration process. Both reactions occur simultaneously and in competition at the same active site. In Couroupita guianensis (Cannonball tree), this protein is Ribulose bisphosphate carboxylase large chain.